A 235-amino-acid polypeptide reads, in one-letter code: Exotoxin type C (235 aa).

An N-terminal signal peptide occupies residues 1-27 (MKKINIIKIVFIITVILISTISPIIKS). 3 residues coordinate Zn(2+): His194, His228, and Asp230.

This sequence belongs to the staphylococcal/streptococcal toxin family.

Its function is as follows. Superantigen that acts as a causative agent of the symptoms associated with scarlet fever. Has been associated with streptococcal toxic shock-like disease and may play a role in the early events of rheumatic fever. Superantigens cross-link major histocompatibility complex (MHC) class II and T-cell receptor (TCR) molecules, resulting in an overstimulation of T-cells associated with a massive release of pyrogenic and inflammatory cytokines. The chain is Exotoxin type C (speC) from Streptococcus pyogenes serotype M1.